Reading from the N-terminus, the 316-residue chain is Prenytransferase adrG (316 aa).

Helical transmembrane passes span 36 to 56 (LLGF…CASI), 60 to 80 (KIPI…SIFL), 131 to 151 (VLIY…FFAL), 163 to 183 (PQIT…SLGL), 191 to 211 (PTVC…VIYS), 247 to 267 (GFLA…VVSV), and 294 to 314 (KSAF…EYCL).

Belongs to the UbiA prenyltransferase family. Mg(2+) serves as cofactor.

It localises to the membrane. It catalyses the reaction 3,5-dimethylorsellinate + (2E,6E)-farnesyl diphosphate = (3R)-3-farnesyl-6-hydroxy-2,3,5-trimethyl-4-oxocyclohexa-1,5-diene-1-carboxylate + diphosphate + H(+). It functions in the pathway secondary metabolite biosynthesis; terpenoid biosynthesis. Prenytransferase; part of the gene cluster that mediates the biosynthesis of andrastins, meroterpenoid compounds that exhibit inhibitory activity against ras farnesyltransferase, suggesting that they could be promising leads for antitumor agents. The first step of the pathway is the synthesis of 3,5-dimethylorsellinic acid (DMOA) by the polyketide synthase adrD via condensation of one acetyl-CoA starter unit with 3 malonyl-CoA units and 2 methylations. DMAO is then converted to farnesyl-DMAO by the prenyltransferase adrG. The methyltransferase adrK catalyzes the methylation of the carboxyl group of farnesyl-DMAO to farnesyl-DMAO methyl ester which is further converted to epoxyfarnesyl-DMAO methyl ester by the FAD-dependent monooxygenase adrH. The terpene cyclase adrI then catalyzes the carbon skeletal rearrangement to generate the andrastin E, the first compound in the pathway having the andrastin scaffold, with the tetracyclic ring system. The post-cyclization tailoring enzymes adrF, adrE, adrJ, and adrA, are involved in the conversion of andrastin E into andrastin A. The short chain dehydrogenase adrF is responsible for the oxidation of the C-3 a hydroxyl group of andrastin E to yield the corresponding ketone, andrastin D. The ketoreductase adrE stereoselectively reduces the carbonyl moiety to reverse the stereochemistry of the C-3 position to yield andrastin F. The acetyltransferase adrJ is the acetyltransferase that attaches the acetyl group to the C-3 hydroxyl group of andrastin F to yield andrastin C. Finally, the cytochrome P450 monooxygenase adrA catalyzes two sequential oxidation reactions of the C-23 methyl group, to generate the corresponding alcohol andrastin B, and aldehyde andrastin A. This Penicillium roqueforti protein is Prenytransferase adrG.